The primary structure comprises 172 residues: HAD-like hydrolase superfamily protein P8B7.31 (172 aa).

The active-site Nucleophile is aspartate 14. Mg(2+) contacts are provided by aspartate 14, aspartate 16, and aspartate 137. Catalysis depends on aspartate 16, which acts as the Proton donor.

It belongs to the HAD-like hydrolase superfamily.

Its subcellular location is the cytoplasm. It localises to the nucleus. This is HAD-like hydrolase superfamily protein P8B7.31 from Schizosaccharomyces pombe (strain 972 / ATCC 24843) (Fission yeast).